A 269-amino-acid chain; its full sequence is uncharacterized protein (269 aa).

This sequence belongs to the methyltransferase superfamily.

This is an uncharacterized protein from Mycobacterium leprae (strain Br4923).